Here is a 672-residue protein sequence, read N- to C-terminus: Inner kinetochore subunit mis6 (672 aa).

The protein belongs to the CENP-I/CTF3 family. In terms of assembly, component of the inner kinetochore constitutive centromere-associated network (CCAN) (also known as central kinetochore Sim4 complex in fission yeast), which is composed of at least cnl2, cnp3, cnp20, fta1, fta2, fta3, fta4, fta6, fta7, mal2, mhf1, mhf2, mis6, mis15, mis17, sim4 and wip1. Interacts with cnp1, sim4, mis15 and mis17.

It localises to the nucleus. The protein resides in the chromosome. The protein localises to the centromere. In terms of biological role, component of the kinetochore, a multiprotein complex that assembles on centromeric DNA and attaches chromosomes to spindle microtubules, mediating chromosome segregation and sister chromatid segregation during meiosis and mitosis. Component of the inner kinetochore constitutive centromere-associated network (CCAN), which serves as a structural platform for outer kinetochore assembly. Required for the localization of cnp1 to the centromere. The protein is Inner kinetochore subunit mis6 (mis6) of Schizosaccharomyces pombe (strain 972 / ATCC 24843) (Fission yeast).